A 178-amino-acid chain; its full sequence is Cytochrome b6-f complex iron-sulfur subunit (178 aa).

Residues 20 to 42 form a helical membrane-spanning segment; sequence LLTFGTATGVALGALYPVANYFM. A Rieske domain is found at 65–161; that stretch reads KTGWLASHQA…VDVDDDAVLV (97 aa). Residues Cys-107, His-109, Cys-125, and His-128 each contribute to the [2Fe-2S] cluster site. Cys-112 and Cys-127 are disulfide-bonded.

Belongs to the Rieske iron-sulfur protein family. The 4 large subunits of the cytochrome b6-f complex are cytochrome b6, subunit IV (17 kDa polypeptide, PetD), cytochrome f and the Rieske protein, while the 4 small subunits are PetG, PetL, PetM and PetN. The complex functions as a dimer. Requires [2Fe-2S] cluster as cofactor.

It localises to the cellular thylakoid membrane. The catalysed reaction is 2 oxidized [plastocyanin] + a plastoquinol + 2 H(+)(in) = 2 reduced [plastocyanin] + a plastoquinone + 4 H(+)(out). Functionally, component of the cytochrome b6-f complex, which mediates electron transfer between photosystem II (PSII) and photosystem I (PSI), cyclic electron flow around PSI, and state transitions. The chain is Cytochrome b6-f complex iron-sulfur subunit from Prochlorococcus marinus subsp. pastoris (strain CCMP1986 / NIES-2087 / MED4).